We begin with the raw amino-acid sequence, 123 residues long: Small ribosomal subunit protein uS17 (123 aa).

It belongs to the universal ribosomal protein uS17 family. Part of the 30S ribosomal subunit.

In terms of biological role, one of the primary rRNA binding proteins, it binds specifically to the 5'-end of 16S ribosomal RNA. This chain is Small ribosomal subunit protein uS17, found in Pyrobaculum aerophilum (strain ATCC 51768 / DSM 7523 / JCM 9630 / CIP 104966 / NBRC 100827 / IM2).